A 1906-amino-acid polypeptide reads, in one-letter code: MFKKDRFSIRKIKGVVGSVFLGSLLMAPSVVDAATYHYVNKEIISQEAKDLIQTGKPDRNEVVYGLVYQKDQLPQTGTEASVLTAFGLLTVGSLLLIYKRKKIASVFLVGAMGLVVLPSAGAVDPVATLALASREGVVEMEGYRYVGYLSGDILKTLGLDTVLEETSAKPGEVTVVEVETPQSITNQEQARTENQVVETEEAPKEEAPKTEESPKEEPKSEVKPTDDTLPKVEEGKEDSAEPAPVEEVGGEVESKPEEKVAVKPESQPSDKPAEESKVEQAGEPVAPREDEKAPVEPEKQPEAPEEEKAVEETPKQEESTPDTKAEETVEPKEETVNQSIEQPKVETPAVEKQTEPTEEPKVEQAGEPVAPREDEQAPTAPVEPEKQPEVPEEEKAVEETPKPEDKIKGIGTKEPVDKSELNNQIDKASSVSPTDYSTASYNALGPVLETAKGVYASEPVKQPEVNSETNKLKTAIDALNVDKTELNNTIADAKTKVKEHYSDRSWQNLQTEVTKAEKVAANTDAKQSEVNEAVEKLTATIEKLVELSEKPILTLTSTDKKILEREAVAKYTLENQNKTKIKSITAELKKGEEVINTVVLTDDKVTTETISAAFKNLEYYKEYTLSTTMIYDRGNGEETETLENQNIQLDLKKVELKNIKRTDLIKYENGKETNESLITTIPDDKSNYYLKITSNNQKTTLLAVKNIEETTVNGTPVYKVTAIADNLVSRTADNKFEEEYVHYIEKPKVHEDNVYYNFKELVEAIQNDPSKEYRLGQSMSARNVVPNGKSYITKEFTGKLLSSEGKQFAITELEHPLFNVITNATINNVNFENVEIERSGQDNIASLANTMKGSSVITNVKITGTLSGRNNVAGFVNNMNDGTRIENVAFFGKLHSTSGNGSHTGGIAGTNYRGIVRKAYVDATITGNKTRASLLVPKVDYGLTLDHLIGTKALLTESVVKGKIDVSNPVEVGAIASKTWPVGTVSNSVSYAKIIRGEELFGSNDVDDSDYASAHIKDLYAVEGYSSGNRSFRKSKTFTKLTKEQADAKVTTFNITADKLESDLSPLAKLNEEKAYSSIQDYNAEYNQAYKNLEKLIPFYNKDYIVYQGNKLNKEHHLNTKEVLSVTAMNNNEFITNLDEANKIIVHYADGTKDYFNLSSSSEGLSNVKEYTITDLGIKYTPNIVQKDNTTLVNDIKSILESVELQSQTMYQHLNRLGDYRVNAIKDLYLEESFTDVKENLTNLITKLVQNEEHQLNDSPAARQMIRDKVEKNKAALLLGLTYLNRYYGVKFGDVNIKELMLFKPDFYGEKVSVLDRLIEIGSKENNIKGSRTFDAFGQVLAKYTKSGNLDAFLNYNRQLFTNIDNMNDWFIDATEDHVYIAERASEVEEIKNSKHRAFDNLKRSHLRNTILPLLNIDKAHLYLISNYNAIAFGSAERLGKKSLEDIKDIVNKAADGYRNYYDFWYRLASDNVKQRLLRDAVIPIWEGYNAPGGWVEKYGRYNTDKVYTPLREFFGPMDKYYNYNGTGAYAAIYPNSDDIRTDVKYVHLEMVGEYGISVYTHETTHVNDRAIYLGGFGHREGTDAEAYAQGMLQTPVTGSGFDEFGSLGINMVFKRKNDGNQWYITDPKTLKTREDINRYMKGYNDTLTLLDEIEAESVISQQNKDLNSAWFKKIDREYRDNNKLNQWDKIRNLSQEEKNELNIQSVNDLVDQQLMTNRNPGNGIYKPEAISYNDQSPYVGVRMMTGIYGGNTSKGAPGAVSFKHNAFRLWGYYGYENGFLGYASNKYKQQSKTDGESVLSDEYIIKKISNNTFNTIEEFKKAYFKEVKDKATKGLTTFEVNGSSVSSYDDLLTLFKEAVKKDAETLKQEANGNKTVSMNNTVKLKEAVYKKLLQQTNSFKTSIFK.

The signal sequence occupies residues 1–33 (MFKKDRFSIRKIKGVVGSVFLGSLLMAPSVVDA). The propeptide occupies 34–76 (ATYHYVNKEIISQEAKDLIQTGKPDRNEVVYGLVYQKDQLPQT). The short motif at 73 to 77 (LPQTG) is the LPXTG sorting signal element. Pentaglycyl murein peptidoglycan amidated threonine is present on T76. Transmembrane regions (helical) follow at residues 77–98 (GTEA…LLIY) and 105–127 (SVFL…DPVA). Residues 128–1906 (TLALASREGV…TNSFKTSIFK (1779 aa)) are Extracellular-facing. A disordered region spans residues 178 to 436 (VETPQSITNQ…KASSVSPTDY (259 aa)). Over residues 181–196 (PQSITNQEQARTENQV) the composition is skewed to polar residues. Basic and acidic residues-rich tracts occupy residues 201-239 (EAPK…KEDS), 252-262 (VESKPEEKVAV), 271-335 (KPAE…KEET), 352-375 (KQTE…REDE), and 383-408 (EPEK…DKIK). A run of 4 repeats spans residues 277-291 (KVEQ…REDE), 293-315 (APVE…ETPK), 361-375 (KVEQ…REDE), and 380-402 (APVE…ETPK). Residues 277–375 (KVEQAGEPVA…GEPVAPREDE (99 aa)) form a 2 X 15 AA repeats of K-V-E-Q-A-G-E-P-V-A-P-R-E-D-E region. The 2 X 23 AA approximate repeats stretch occupies residues 293-375 (APVEPEKQPE…GEPVAPREDE (83 aa)). The segment covering 421-436 (LNNQIDKASSVSPTDY) has biased composition (polar residues). Position 1562 (H1562) interacts with Zn(2+). E1563 is an active-site residue. The Zn(2+) site is built by H1566 and E1586.

Belongs to the peptidase M26 family. Requires Zn(2+) as cofactor. Post-translationally, the Gram-positive cell-wall anchor motif LPXTG is located in the N-terminal part, in contrast to such motifs in other known streptococcal and staphylococcal proteins. The protease could be cleaved by the sortase and anchored in the membrane via the two potential N-terminal transmembrane domains, whereas the propeptide located prior to the LPXTG motif would remain attached to the cell wall peptidoglycan by an amide bond.

The protein localises to the secreted. It localises to the cell wall. Its subcellular location is the membrane. Its function is as follows. Is a virulence factor capable of inducing inflammation in the lower respiratory tract, by increasing tumor necrosis factor alpha (TNF-alpha) concentration in the lungs. Also appears to have other functions important in virulence in models of pneumonia and septicemia. The chain is Zinc metalloprotease ZmpB (zmpB) from Streptococcus pneumoniae serotype 4 (strain ATCC BAA-334 / TIGR4).